Consider the following 397-residue polypeptide: Enoyl-[acyl-carrier-protein] reductase [NADH] (397 aa).

Residues 48-53 (GASTGY), 74-75 (FE), 111-112 (DA), and 139-140 (VA) each bind NAD(+). Tyrosine 225 is a binding site for substrate. Tyrosine 235 serves as the catalytic Proton donor. Residues lysine 244 and 273 to 275 (VVT) each bind NAD(+).

Belongs to the TER reductase family. In terms of assembly, monomer.

It carries out the reaction a 2,3-saturated acyl-[ACP] + NAD(+) = a (2E)-enoyl-[ACP] + NADH + H(+). The protein operates within lipid metabolism; fatty acid biosynthesis. Involved in the final reduction of the elongation cycle of fatty acid synthesis (FAS II). Catalyzes the reduction of a carbon-carbon double bond in an enoyl moiety that is covalently linked to an acyl carrier protein (ACP). The polypeptide is Enoyl-[acyl-carrier-protein] reductase [NADH] (Burkholderia thailandensis (strain ATCC 700388 / DSM 13276 / CCUG 48851 / CIP 106301 / E264)).